Reading from the N-terminus, the 84-residue chain is Putative defensin-like protein 101 (84 aa).

A signal peptide spans 1–27 (MDITKNIVTLLLVVLFPILFYYNNVLA). Cystine bridges form between cysteine 39–cysteine 81, cysteine 43–cysteine 67, cysteine 52–cysteine 79, and cysteine 56–cysteine 80.

This sequence belongs to the DEFL family.

The protein resides in the secreted. The sequence is that of Putative defensin-like protein 101 from Arabidopsis thaliana (Mouse-ear cress).